We begin with the raw amino-acid sequence, 104 residues long: Large ribosomal subunit protein bL21 (104 aa).

Over residues 78-91 (KRRRQNSRRKRGHR) the composition is skewed to basic residues. Residues 78 to 104 (KRRRQNSRRKRGHRQDHTVVRITGISA) form a disordered region.

The protein belongs to the bacterial ribosomal protein bL21 family. In terms of assembly, part of the 50S ribosomal subunit. Contacts protein L20.

Functionally, this protein binds to 23S rRNA in the presence of protein L20. This chain is Large ribosomal subunit protein bL21, found in Methylobacterium radiotolerans (strain ATCC 27329 / DSM 1819 / JCM 2831 / NBRC 15690 / NCIMB 10815 / 0-1).